Consider the following 85-residue polypeptide: Beta-insect depressant toxin Lqh-dprIT3d (85 aa).

The N-terminal stretch at 1-21 is a signal peptide; that stretch reads MKLLLLLTISASMLIEGLVNA. Positions 22 to 82 constitute an LCN-type CS-alpha/beta domain; it reads DGYIRGGDGC…EWDYETNTCG (61 aa). 4 disulfides stabilise this stretch: C31/C81, C35/C56, C42/C63, and C46/C65. G82 carries the glycine amide modification.

It belongs to the long (4 C-C) scorpion toxin superfamily. Sodium channel inhibitor family. Beta subfamily. Expressed by the venom gland.

Its subcellular location is the secreted. Functionally, depressant insect beta-toxins cause a transient contraction paralysis followed by a slow flaccid paralysis. They bind voltage-independently at site-4 of sodium channels (Nav) and block action potentials, primarily by depolarizing the axonal membrane and suppressing the sodium current. This depressant toxin is active only on insects. It is found in a relatively small amount in the venom, and its activity on insects is 10-fold higher compared to other known depressant toxins. In Leiurus hebraeus (Hebrew deathstalker scorpion), this protein is Beta-insect depressant toxin Lqh-dprIT3d.